The following is a 635-amino-acid chain: 4-hydroxy-3-methylbut-2-enyl diphosphate reductase (635 aa).

Positions 1–279 (MSIILAKKSG…KEAIFKMSNK (279 aa)) are 4-hydroxy-3-methylbut-2-enyl diphosphate reductase. Cys12 contributes to the [4Fe-4S] cluster binding site. Residues His42 and His77 each coordinate (2E)-4-hydroxy-3-methylbut-2-enyl diphosphate. The dimethylallyl diphosphate site is built by His42 and His77. Positions 42 and 77 each coordinate isopentenyl diphosphate. [4Fe-4S] cluster is bound at residue Cys99. His127 provides a ligand contact to (2E)-4-hydroxy-3-methylbut-2-enyl diphosphate. Residue His127 coordinates dimethylallyl diphosphate. His127 serves as a coordination point for isopentenyl diphosphate. Glu129 functions as the Proton donor in the catalytic mechanism. A (2E)-4-hydroxy-3-methylbut-2-enyl diphosphate-binding site is contributed by Thr163. Cys191 serves as a coordination point for [4Fe-4S] cluster. Residues Ser219, Ser220, Asn221, and Ser263 each coordinate (2E)-4-hydroxy-3-methylbut-2-enyl diphosphate. 4 residues coordinate dimethylallyl diphosphate: Ser219, Ser220, Asn221, and Ser263. The isopentenyl diphosphate site is built by Ser219, Ser220, Asn221, and Ser263. 4 S1 motif domains span residues 298–373 (GQEV…LNRE), 380–455 (KEAF…ASRR), 476–544 (DTIK…LSIK), and 561–630 (GNIV…LSIK).

It in the N-terminal section; belongs to the IspH family. The cofactor is [4Fe-4S] cluster.

The catalysed reaction is isopentenyl diphosphate + 2 oxidized [2Fe-2S]-[ferredoxin] + H2O = (2E)-4-hydroxy-3-methylbut-2-enyl diphosphate + 2 reduced [2Fe-2S]-[ferredoxin] + 2 H(+). The enzyme catalyses dimethylallyl diphosphate + 2 oxidized [2Fe-2S]-[ferredoxin] + H2O = (2E)-4-hydroxy-3-methylbut-2-enyl diphosphate + 2 reduced [2Fe-2S]-[ferredoxin] + 2 H(+). The protein operates within isoprenoid biosynthesis; dimethylallyl diphosphate biosynthesis; dimethylallyl diphosphate from (2E)-4-hydroxy-3-methylbutenyl diphosphate: step 1/1. It functions in the pathway isoprenoid biosynthesis; isopentenyl diphosphate biosynthesis via DXP pathway; isopentenyl diphosphate from 1-deoxy-D-xylulose 5-phosphate: step 6/6. Its function is as follows. Catalyzes the conversion of 1-hydroxy-2-methyl-2-(E)-butenyl 4-diphosphate (HMBPP) into a mixture of isopentenyl diphosphate (IPP) and dimethylallyl diphosphate (DMAPP). Acts in the terminal step of the DOXP/MEP pathway for isoprenoid precursor biosynthesis. This chain is 4-hydroxy-3-methylbut-2-enyl diphosphate reductase, found in Clostridium tetani (strain Massachusetts / E88).